Consider the following 116-residue polypeptide: Large ribosomal subunit protein uL18 (116 aa).

It belongs to the universal ribosomal protein uL18 family. As to quaternary structure, part of the 50S ribosomal subunit; part of the 5S rRNA/L5/L18/L25 subcomplex. Contacts the 5S and 23S rRNAs.

In terms of biological role, this is one of the proteins that bind and probably mediate the attachment of the 5S RNA into the large ribosomal subunit, where it forms part of the central protuberance. The polypeptide is Large ribosomal subunit protein uL18 (Shewanella sp. (strain ANA-3)).